An 82-amino-acid polypeptide reads, in one-letter code: Beta-defensin 113 (82 aa).

A signal peptide spans 1-16 (MKILCIFLTFFFTVSC). Cystine bridges form between cysteine 35–cysteine 61, cysteine 42–cysteine 56, and cysteine 46–cysteine 62.

It belongs to the beta-defensin family.

Its subcellular location is the secreted. Its function is as follows. Has antibacterial activity. The polypeptide is Beta-defensin 113 (DEFB113) (Pan troglodytes (Chimpanzee)).